The primary structure comprises 101 residues: Ubiquitin-related modifier 1 homolog (101 aa).

Residue G101 is modified to 1-thioglycine. G101 is covalently cross-linked (Glycyl lysine isopeptide (Gly-Lys) (interchain with K-? in acceptor proteins)).

This sequence belongs to the URM1 family. In terms of assembly, interacts with cer. C-terminal thiocarboxylation occurs in 2 steps, it is first acyl-adenylated (-COAMP) via the hesA/moeB/thiF part of the MOCS3 homolog, then thiocarboxylated (-COSH) via the rhodanese domain of the MOCS3 homolog.

The protein localises to the cytoplasm. It functions in the pathway tRNA modification; 5-methoxycarbonylmethyl-2-thiouridine-tRNA biosynthesis. Its function is as follows. Acts as a sulfur carrier required for 2-thiolation of mcm(5)S(2)U at tRNA wobble positions of cytosolic tRNA(Lys), tRNA(Glu) and tRNA(Gln). Serves as sulfur donor in tRNA 2-thiolation reaction by being thiocarboxylated (-COSH) at its C-terminus by MOCS3. The sulfur is then transferred to tRNA to form 2-thiolation of mcm(5)S(2)U. Also acts as a ubiquitin-like protein (UBL) that is covalently conjugated via an isopeptide bond to lysine residues of target proteins such as Prx2/Jafrac1, Ciao1, Eip71CD and GILT1. The thiocarboxylated form serves as substrate for conjugation and oxidative stress specifically induces the formation of UBL-protein conjugates. The chain is Ubiquitin-related modifier 1 homolog from Drosophila sechellia (Fruit fly).